The primary structure comprises 146 residues: HTH-type transcriptional regulator FarR (146 aa).

Residues 7-139 (HASINIGLIQ…LKDLLAELAK (133 aa)) form the HTH marR-type domain. Positions 53–76 (FQDLANQACILRPSLTGILTRLEK) form a DNA-binding region, H-T-H motif.

Its activity is regulated as follows. Repressor activity requires the presence of the Integration Host Factor (IHF), which binds to sequences located between FarR binding sites A and C. IHF binding to the promoter region stabilizes the binding of FarR to its binding sites A and C and as a consequence, enhances repression of the farAB operon. In terms of biological role, negatively controls expression of the farAB operon by binding directly to the farAB promoter region. Binds to three sites (sites A, B and C) within the DNA sequence upstream of farA. Also represses its own expression. The polypeptide is HTH-type transcriptional regulator FarR (Neisseria gonorrhoeae).